The chain runs to 921 residues: AdoMet-dependent rRNA methyltransferase SPB1 (921 aa).

Residues Gly-58, Trp-60, Asp-78, Asp-94, and Asp-119 each contribute to the S-adenosyl-L-methionine site. Lys-159 functions as the Proton acceptor in the catalytic mechanism. The stretch at 367 to 414 (VEEMDEDDQIDDELARLNEEAARKARKERRRKNELRQKKILKMQLQMT) forms a coiled coil. 5 disordered regions span residues 448 to 476 (ALIQ…DPET), 491 to 604 (EFKQ…KRSL), 635 to 713 (ELDE…GKQK), 814 to 835 (LEKA…EKEK), and 866 to 921 (RGLK…GPRN). Positions 491–522 (EFKQKQSERDAKFRAKQARLQDAKNDSWHGIK) are enriched in basic and acidic residues. Acidic residues-rich tracts occupy residues 523 to 542 (DDEE…ESEG), 555 to 568 (ETFD…EEDE), 635 to 684 (ELDE…DDFE), and 697 to 708 (DEEWDLNGEDEE). Residues 796-835 (IKKVAEAKARKKMRTLRRLEKAQKKAETINENEDISEKEK) adopt a coiled-coil conformation. Positions 814–823 (LEKAQKKAET) are enriched in basic and acidic residues. Residues 868–879 (LKGRPKGTKGRY) are compositionally biased toward basic residues. Positions 880-892 (KMVDPRMKKELRA) are enriched in basic and acidic residues.

Belongs to the class I-like SAM-binding methyltransferase superfamily. RNA methyltransferase RlmE family. SPB1 subfamily. Component of the nucleolar and nucleoplasmic pre-60S ribosomal particle.

The protein resides in the nucleus. The protein localises to the nucleolus. The catalysed reaction is a ribonucleotide in rRNA + S-adenosyl-L-methionine = a 2'-O-methylribonucleotide in rRNA + S-adenosyl-L-homocysteine + H(+). Required for proper assembly of pre-ribosomal particles during the biogenesis of the 60S ribosomal subunit. In Mycosarcoma maydis (Corn smut fungus), this protein is AdoMet-dependent rRNA methyltransferase SPB1.